The primary structure comprises 213 residues: Lactobacillus shifted protein (213 aa).

Residues 28 to 38 are compositionally biased toward polar residues; it reads PRFTENAMQPN. Disordered regions lie at residues 28–56 and 182–213; these read PRFT…DATP and PTSS…YEQR.

This chain is Lactobacillus shifted protein (lbsA), found in Emericella nidulans (strain FGSC A4 / ATCC 38163 / CBS 112.46 / NRRL 194 / M139) (Aspergillus nidulans).